Reading from the N-terminus, the 223-residue chain is MSSAALSGIGMTSQRTRERMLRRLSEKGIKDEVVLAALGAIPRHIFVDEALSSRAYEDGSLPIGFGQTISQPYIVARMTEILRNGGPLGKVLEIGTGCGYQTAVLSKVSKEVYSVERIRPLLMKARGHLRELRLANIKLKHADGTMGLPELAPFDGIMVTAAARHIPQELLEQLAVGGRMVIPVGTEEQILYLVEHLKTASGSEYRQSKLEAVKFVPLLGGTN.

S70 is an active-site residue.

The protein belongs to the methyltransferase superfamily. L-isoaspartyl/D-aspartyl protein methyltransferase family.

It localises to the cytoplasm. The enzyme catalyses [protein]-L-isoaspartate + S-adenosyl-L-methionine = [protein]-L-isoaspartate alpha-methyl ester + S-adenosyl-L-homocysteine. Catalyzes the methyl esterification of L-isoaspartyl residues in peptides and proteins that result from spontaneous decomposition of normal L-aspartyl and L-asparaginyl residues. It plays a role in the repair and/or degradation of damaged proteins. This Methylobacillus flagellatus (strain ATCC 51484 / DSM 6875 / VKM B-1610 / KT) protein is Protein-L-isoaspartate O-methyltransferase.